Here is a 170-residue protein sequence, read N- to C-terminus: Ribosome maturation factor RimM (170 aa).

The PRC barrel domain maps to 97–170 (KPDEYYWVDL…LVVVDWDPEF (74 aa)).

Belongs to the RimM family. As to quaternary structure, binds ribosomal protein uS19.

It localises to the cytoplasm. Its function is as follows. An accessory protein needed during the final step in the assembly of 30S ribosomal subunit, possibly for assembly of the head region. Essential for efficient processing of 16S rRNA. May be needed both before and after RbfA during the maturation of 16S rRNA. It has affinity for free ribosomal 30S subunits but not for 70S ribosomes. In Stenotrophomonas maltophilia (strain K279a), this protein is Ribosome maturation factor RimM.